The following is a 246-amino-acid chain: Sulfate transporter CysZ (246 aa).

The next 4 helical transmembrane spans lie at 24 to 44 (LFVL…IGFA), 69 to 89 (IVWP…FTMV), 148 to 168 (LLVL…WILF), and 214 to 234 (LLIP…ATLF).

The protein belongs to the CysZ family.

The protein localises to the cell inner membrane. High affinity, high specificity proton-dependent sulfate transporter, which mediates sulfate uptake. Provides the sulfur source for the cysteine synthesis pathway. This Pseudomonas aeruginosa (strain ATCC 15692 / DSM 22644 / CIP 104116 / JCM 14847 / LMG 12228 / 1C / PRS 101 / PAO1) protein is Sulfate transporter CysZ.